Reading from the N-terminus, the 1434-residue chain is DNA-directed RNA polymerase subunit beta' (1434 aa).

Positions 70, 72, 85, and 88 each coordinate Zn(2+). Residues Asp-460, Asp-462, and Asp-464 each contribute to the Mg(2+) site. Positions 840, 915, 922, and 925 each coordinate Zn(2+).

It belongs to the RNA polymerase beta' chain family. As to quaternary structure, the RNAP catalytic core consists of 2 alpha, 1 beta, 1 beta' and 1 omega subunit. When a sigma factor is associated with the core the holoenzyme is formed, which can initiate transcription. Requires Mg(2+) as cofactor. The cofactor is Zn(2+).

It catalyses the reaction RNA(n) + a ribonucleoside 5'-triphosphate = RNA(n+1) + diphosphate. Its function is as follows. DNA-dependent RNA polymerase catalyzes the transcription of DNA into RNA using the four ribonucleoside triphosphates as substrates. This chain is DNA-directed RNA polymerase subunit beta', found in Aeromonas hydrophila subsp. hydrophila (strain ATCC 7966 / DSM 30187 / BCRC 13018 / CCUG 14551 / JCM 1027 / KCTC 2358 / NCIMB 9240 / NCTC 8049).